We begin with the raw amino-acid sequence, 107 residues long: Glutaredoxin 4 (107 aa).

In terms of domain architecture, Glutaredoxin spans 4–106; that stretch reads IDKIKQQINE…TLLKETATKH (103 aa). Lysine 21 serves as a coordination point for glutathione. Cysteine 29 provides a ligand contact to [2Fe-2S] cluster. Residues arginine 58, phenylalanine 70, and 83–84 each bind glutathione; that span reads CD.

Belongs to the glutaredoxin family. Monothiol subfamily. In terms of assembly, homodimer.

The protein localises to the cytoplasm. Monothiol glutaredoxin involved in the biogenesis of iron-sulfur clusters. The polypeptide is Glutaredoxin 4 (grxD) (Haemophilus ducreyi (strain 35000HP / ATCC 700724)).